The chain runs to 374 residues: MPHKVSLSRLKLTDFRNYAAAALALDGRHAVLTGDNGAGKTNLMEAVSLLSPGRGLRRAAYGDITRVGAAGGFSIFAALDGMEGDVEIGTGIETGEETTARKLRINGTTAKTADELTDHLRLLWLTPAMDGLFTGASSDRRRFLDRLVLSLDPAHGRRASDFERAMRSRNKLLDEGRFDPSWLAGIEEQMASLGIAMALARQEMLGLLTRLIEETRETSPFPSASLQLSGFMDGQFSRPSVDLEDDYAAMLAESRYRDAGAGRTLEGPHRADLIVHHREKAMEAERCSTGEQKALLVGLVLAHARLVGNLTGHAPILLLDEIAAHLDEGRRAALFDLIDGLGGQAFMTGTDRAMFSALGDKAQFFTVADGRVFE.

Position 34-41 (34-41) interacts with ATP; the sequence is GDNGAGKT.

The protein belongs to the RecF family.

The protein localises to the cytoplasm. Its function is as follows. The RecF protein is involved in DNA metabolism; it is required for DNA replication and normal SOS inducibility. RecF binds preferentially to single-stranded, linear DNA. It also seems to bind ATP. The protein is DNA replication and repair protein RecF of Rhizobium johnstonii (strain DSM 114642 / LMG 32736 / 3841) (Rhizobium leguminosarum bv. viciae).